The sequence spans 489 residues: Zinc finger protein 772 (489 aa).

Positions Val-27 to Ala-98 constitute a KRAB domain. 10 consecutive C2H2-type zinc fingers follow at residues Tyr-144–His-166, Tyr-172–His-194, Tyr-266–His-288, Tyr-294–His-316, Tyr-322–His-344, Tyr-350–His-372, Tyr-378–His-400, Tyr-406–His-428, Tyr-434–His-456, and Tyr-462–His-484.

It belongs to the krueppel C2H2-type zinc-finger protein family.

It is found in the nucleus. May be involved in transcriptional regulation. This Homo sapiens (Human) protein is Zinc finger protein 772 (ZNF772).